The primary structure comprises 89 residues: Small ribosomal subunit protein uS17 (89 aa).

It belongs to the universal ribosomal protein uS17 family. Part of the 30S ribosomal subunit.

One of the primary rRNA binding proteins, it binds specifically to the 5'-end of 16S ribosomal RNA. This Bdellovibrio bacteriovorus (strain ATCC 15356 / DSM 50701 / NCIMB 9529 / HD100) protein is Small ribosomal subunit protein uS17.